The following is a 305-amino-acid chain: Ribosomal RNA large subunit methyltransferase F (305 aa).

Belongs to the methyltransferase superfamily. METTL16/RlmF family.

The protein resides in the cytoplasm. It catalyses the reaction adenosine(1618) in 23S rRNA + S-adenosyl-L-methionine = N(6)-methyladenosine(1618) in 23S rRNA + S-adenosyl-L-homocysteine + H(+). In terms of biological role, specifically methylates the adenine in position 1618 of 23S rRNA. In Bacteroides fragilis (strain YCH46), this protein is Ribosomal RNA large subunit methyltransferase F.